The chain runs to 145 residues: Large ribosomal subunit protein uL13 (145 aa).

It belongs to the universal ribosomal protein uL13 family. In terms of assembly, part of the 50S ribosomal subunit.

In terms of biological role, this protein is one of the early assembly proteins of the 50S ribosomal subunit, although it is not seen to bind rRNA by itself. It is important during the early stages of 50S assembly. In Macrococcus caseolyticus (strain JCSC5402) (Macrococcoides caseolyticum), this protein is Large ribosomal subunit protein uL13.